We begin with the raw amino-acid sequence, 449 residues long: SUPPRESSOR OF GAMMA RESPONSE 1 (449 aa).

An NAC domain is found at 58–211; sequence LPRGVKFDPS…DYVVSKIFYQ (154 aa). A DNA-binding region spans residues 167-217; it reads RGCKKIMVLYGGKAVKTNWVMHQYHLGIEEDEKEGDYVVSKIFYQQPQQLV. The segment covering 324 to 336 has biased composition (basic and acidic residues); the sequence is DDKEEQEKDRDNE. Residues 324–348 are disordered; it reads DDKEEQEKDRDNENQGEEDPTWFDS.

In terms of processing, phosphorylated in a DNA stress-independent manner. Hyperphosphorylated on SQ motifs upon double-strand breaks, H(2)O(2) or zeocin treatments. Hyperphosphorylation is required for SOG1 function, and unlike constitutive phosphorylation, is ATM dependent. As to expression, expressed in shoot and root apical meristems, in lateral root primordia, in the vasculature of young leaves and in the root stele.

The protein resides in the nucleus. Functionally, transcription factor regulating the transcriptional activation response to gamma irradiation. Required for stem-cell death induced by UVB or by gamma irradiation. Not required for ATM activation, but participates in pathways governed by both ATM and ATR sensor kinases. Involved in DNA damage response (DDR) system that regulates cell cycle arrest. Functional homolog of animal p53. Regulates SMR5 and SMR7 transcription. Regulates DNA repair and cytokinin signaling separately and plays a key role in controlling lateral root formation under genotoxic stress. The polypeptide is SUPPRESSOR OF GAMMA RESPONSE 1 (Arabidopsis thaliana (Mouse-ear cress)).